The following is a 355-amino-acid chain: Squamosa promoter-binding protein-like 15 (355 aa).

Residues 1–27 are disordered; it reads MELLKGSGLNQTESGGSSSTESSSLSG. The segment covering 12–27 has biased composition (low complexity); that stretch reads TESGGSSSTESSSLSG. An SBP-type zinc finger spans residues 61 to 138; that stretch reads TARCQVEGCR…ACHNERRRKP (78 aa). Positions 64, 69, 86, 89, 105, 108, 112, and 124 each coordinate Zn(2+). Positions 121–137 match the Bipartite nuclear localization signal motif; it reads KRSCRRRLACHNERRRK.

The protein resides in the nucleus. In terms of biological role, probable transcription factor required for the flowering response to vernalization in the shoot apical meristem (SAM). Defines the competence of shoot meristems to flower in response to vernalization in perennials. The polypeptide is Squamosa promoter-binding protein-like 15 (Arabis alpina (Alpine rock-cress)).